The following is a 2167-amino-acid chain: Papilin (2167 aa).

The N-terminal stretch at 1-19 is a signal peptide; it reads MRLLLFSAALLLCSVPTWA. Positions 76–123 constitute a TSP type-1 1 domain; sequence TGNWGPWVPENECSRSCGGGVQLEKRQCSGDCTGASVRYISCNLNACE. 3 disulfides stabilise this stretch: C88–C117, C92–C122, and C103–C107. N-linked (GlcNAc...) asparagine glycosylation occurs at N268. TSP type-1 domains are found at residues 341 to 402, 404 to 459, and 461 to 525; these read VDYM…VDCE, EWFT…TCNR, and ACPE…GPCE. Disulfide bonds link C353–C396, C357–C401, and C368–C382. N-linked (GlcNAc...) asparagine glycans are attached at residues N386 and N445. N-linked (GlcNAc...) asparagine glycans are attached at residues N541, N568, and N638. TSP type-1 domains follow at residues 585–643 and 645–702; these read CEYE…TNEE and CTGT…DDCP. Residues N715, N729, N741, N814, N820, N857, N933, and N1090 are each glycosylated (N-linked (GlcNAc...) asparagine). 6 disulfide bridges follow: C1089–C1141, C1099–C1124, C1116–C1137, C1150–C1202, C1161–C1185, and C1177–C1198. 2 consecutive BPTI/Kunitz inhibitor domains span residues 1089 to 1141 and 1150 to 1202; these read CNQT…ETIC and CYLP…SMFC. Residues 1239 to 1273 are disordered; it reads QSAEQPQPQQPQQQQQQQQQQPQQPRQSMEDICRS. The span at 1243-1263 shows a compositional bias: low complexity; the sequence is QPQPQQPQQQQQQQQQQPQQP. Intrachain disulfides connect C1271/C1321, C1280/C1304, and C1296/C1317. One can recognise a BPTI/Kunitz inhibitor 3 domain in the interval 1271-1321; sequence CRSRQDAGPCETYSDQWFYNAFSQECETFTYGGCGGNLNRFRSKDECEQRC. The disordered stretch occupies residues 1332–1365; the sequence is ARQEQAQPAAQPAQPAQPSNIVSPPQQSASPVVV. 9 cysteine pairs are disulfide-bonded: C1375-C1425, C1384-C1408, C1400-C1421, C1447-C1497, C1456-C1480, C1472-C1493, C1504-C1554, C1513-C1537, and C1529-C1550. BPTI/Kunitz inhibitor domains are found at residues 1375-1425, 1447-1497, and 1504-1554; these read CHLN…ESLC, CDEA…KAAC, and CQLP…QARC. Residues 1556 to 1615 are disordered; sequence KDDQTTTTSQPEELPSLPLVQEDPQPRPAFSLKQSFAHSRRRDAPFARSVSARHHTPDSE. Disulfide bonds link C1621/C1671, C1630/C1654, C1646/C1667, C1731/C1781, C1740/C1764, C1756/C1777, C1790/C1840, C1799/C1823, and C1815/C1836. BPTI/Kunitz inhibitor domains lie at 1621–1671, 1731–1781, and 1790–1840; these read CYAV…ETSC, CMLP…ERAC, and CELP…ESLC. N-linked (GlcNAc...) asparagine glycosylation is present at N1848. Cystine bridges form between C1853/C1903, C1862/C1886, C1878/C1899, C1914/C1964, C1923/C1947, and C1939/C1960. BPTI/Kunitz inhibitor domains lie at 1853–1903 and 1914–1964; these read CTLE…QQSC and CTLR…FRRC. N-linked (GlcNAc...) asparagine glycosylation is found at N1992, N2087, and N2133. The disordered stretch occupies residues 2075–2106; it reads RTTSRPMLTPSKNFSLGTPPTPSPSTVSTTPF. A compositionally biased stretch (polar residues) spans 2078–2090; the sequence is SRPMLTPSKNFSL. One can recognise a PLAC domain in the interval 2124–2163; that stretch reads TSNSCMDVGNASTCDLIVKNGLCGKKRYGTFCCHTCTRVH.

It belongs to the papilin family. In terms of tissue distribution, localizes to the basement membranes of the gonad primordium, pharynx and intestine (at protein level). Expressed in head and CAN neurons, coelomocytes, body-wall muscles and anal depressor and sphincter and stomatointestinal muscles. Expressed Isoform a: is expressed in body wall muscles and distal cell tips. Isoform b: expressed in embryonic muscles.

The protein localises to the secreted. The protein resides in the extracellular space. It localises to the extracellular matrix. Its subcellular location is the basement membrane. Functionally, involved in pharynx morphogenesis probably by remodeling the basement membrane. Plays a role in embryogenesis, the second phase of distal cell tip migration and is required for distribution of the metalloproteinase, mig-17, during organogenesis. Its function is as follows. Plays a role in post embryonic distal cell tip migration. Essential extracellular matrix (ECM) protein required for hypodermal enclosure in the embryo. The sequence is that of Papilin (mig-6) from Caenorhabditis elegans.